The chain runs to 286 residues: Aquaporin PIP1-3 (286 aa).

Methionine 1 carries the post-translational modification N-acetylmethionine. The disordered stretch occupies residues 1–33; the sequence is MEGKEEDVRVGANKFPERQPIGTSAQTDKDYKE. The Cytoplasmic portion of the chain corresponds to 1 to 54; sequence MEGKEEDVRVGANKFPERQPIGTSAQTDKDYKEPPPAPFFEPGELSSWSFYRAG. The chain crosses the membrane as a helical span at residues 55–75; sequence IAEFIATFLFLYITVLTVMGV. Over 76–81 the chain is Extracellular; sequence KRAPNM. A helical membrane pass occupies residues 82-102; the sequence is CASVGIQGIAWAFGGMIFALV. Over 103–132 the chain is Cytoplasmic; sequence YCTAGISGGHINPAVTFGLFLARKLSLTRA. The short motif at 114 to 116 is the NPA 1 element; it reads NPA. Residues 133–153 traverse the membrane as a helical segment; that stretch reads VFYIVMQCLGAICGAGVVKGF. At 154 to 174 the chain is on the extracellular side; sequence QPNPYQTLGGGANTVAHGYTK. The chain crosses the membrane as a helical span at residues 175–195; the sequence is GSGLGAEIIGTFVLVYTVFSA. The Cytoplasmic portion of the chain corresponds to 196 to 208; it reads TDAKRSARDSHVP. The helical transmembrane segment at 209–229 threads the bilayer; it reads ILAPLPIGFAVFLVHLATIPI. Residues 230-256 are Extracellular-facing; the sequence is TGTGINPARSLGAAIIYNKDHAWDDHW. Positions 235–237 match the NPA 2 motif; sequence NPA. The helical transmembrane segment at 257-277 threads the bilayer; it reads IFWVGPFIGAALAALYHQLVI. Topologically, residues 278 to 286 are cytoplasmic; the sequence is RAIPFKSRS. At serine 284 the chain carries Phosphoserine.

Belongs to the MIP/aquaporin (TC 1.A.8) family. PIP (TC 1.A.8.11) subfamily. Expressed in roots, above ground, ripening fruit, flower buds, green siliques and senescing leaves.

Its subcellular location is the cell membrane. In terms of biological role, water channel required to facilitate the transport of water across cell membrane. Its function is impaired by Hg(2+). The chain is Aquaporin PIP1-3 (PIP1-3) from Arabidopsis thaliana (Mouse-ear cress).